We begin with the raw amino-acid sequence, 482 residues long: Glutamyl-tRNA(Gln) amidotransferase subunit A (482 aa).

Residues Lys-75 and Ser-150 each act as charge relay system in the active site. The active-site Acyl-ester intermediate is Ser-174.

It belongs to the amidase family. GatA subfamily. As to quaternary structure, heterotrimer of A, B and C subunits.

It carries out the reaction L-glutamyl-tRNA(Gln) + L-glutamine + ATP + H2O = L-glutaminyl-tRNA(Gln) + L-glutamate + ADP + phosphate + H(+). Allows the formation of correctly charged Gln-tRNA(Gln) through the transamidation of misacylated Glu-tRNA(Gln) in organisms which lack glutaminyl-tRNA synthetase. The reaction takes place in the presence of glutamine and ATP through an activated gamma-phospho-Glu-tRNA(Gln). This Cyanothece sp. (strain PCC 7425 / ATCC 29141) protein is Glutamyl-tRNA(Gln) amidotransferase subunit A.